The primary structure comprises 637 residues: Mitochondrial Rho GTPase 1 (637 aa).

At 1–613 (MSDGETLADV…LRRVFYLSDS (613 aa)) the chain is on the cytoplasmic side. The region spanning 7–184 (LADVRIVLIG…FYYAQKAVIY (178 aa)) is the Miro 1 domain. GTP contacts are provided by residues 28–35 (SLLEDEWV), 74–78 (ISEMR), and 135–138 (LPSG). 2 EF-hand domains span residues 200–235 (RAKK…CFGI) and 320–355 (EGVQ…CSAP). Residues D213, D215, D217, Y219, E224, D333, D335, D337, C339, and E344 each coordinate Ca(2+). The Miro 2 domain occupies 436–601 (RKVFQCLVVG…FEQLAMMAVY (166 aa)). GTP-binding positions include 445–452 (GAKDAGKT), 482–486 (KVKEE), and 549–552 (TKVE). Residues 614–634 (NLLSKITFGAAIVALAGFLVL) form a helical; Anchor for type IV membrane protein membrane-spanning segment. At 635-637 (KNL) the chain is on the mitochondrial intermembrane side.

The protein belongs to the mitochondrial Rho GTPase family.

It localises to the mitochondrion outer membrane. Mitochondrial GTPase involved in mitochondrial trafficking. Probably involved in control of anterograde transport of mitochondria and their subcellular distribution. The chain is Mitochondrial Rho GTPase 1 from Caenorhabditis briggsae.